The following is a 257-amino-acid chain: 5-oxoprolinase subunit A (257 aa).

Belongs to the LamB/PxpA family. As to quaternary structure, forms a complex composed of PxpA, PxpB and PxpC.

It catalyses the reaction 5-oxo-L-proline + ATP + 2 H2O = L-glutamate + ADP + phosphate + H(+). In terms of biological role, catalyzes the cleavage of 5-oxoproline to form L-glutamate coupled to the hydrolysis of ATP to ADP and inorganic phosphate. The protein is 5-oxoprolinase subunit A of Oceanobacillus iheyensis (strain DSM 14371 / CIP 107618 / JCM 11309 / KCTC 3954 / HTE831).